A 398-amino-acid chain; its full sequence is Argininosuccinate synthase (398 aa).

Residues 9-17 and A36 each bind ATP; that span reads AYSGGLDTS. Positions 87 and 92 each coordinate L-citrulline. G117 is an ATP binding site. Residues T119, N123, and D124 each contribute to the L-aspartate site. Residue N123 participates in L-citrulline binding. R127, S176, S185, E261, and Y273 together coordinate L-citrulline.

It belongs to the argininosuccinate synthase family. Type 1 subfamily. In terms of assembly, homotetramer.

Its subcellular location is the cytoplasm. The catalysed reaction is L-citrulline + L-aspartate + ATP = 2-(N(omega)-L-arginino)succinate + AMP + diphosphate + H(+). Its pathway is amino-acid biosynthesis; L-arginine biosynthesis; L-arginine from L-ornithine and carbamoyl phosphate: step 2/3. This is Argininosuccinate synthase from Desulfotalea psychrophila (strain LSv54 / DSM 12343).